Here is a 484-residue protein sequence, read N- to C-terminus: tRNA sulfurtransferase (484 aa).

Residues 63-167 form the THUMP domain; it reads QGIRDRLSCM…DQRLFVVHDQ (105 aa). ATP-binding positions include 185 to 186, Lys-267, Gly-289, and Gln-298; that span reads LM. Cys-346 and Cys-457 are disulfide-bonded. Positions 405–483 constitute a Rhodanese domain; sequence ALAGQVIIDI…GHANVRVYRP (79 aa). Cys-457 functions as the Cysteine persulfide intermediate in the catalytic mechanism.

Belongs to the ThiI family.

The protein resides in the cytoplasm. The catalysed reaction is [ThiI sulfur-carrier protein]-S-sulfanyl-L-cysteine + a uridine in tRNA + 2 reduced [2Fe-2S]-[ferredoxin] + ATP + H(+) = [ThiI sulfur-carrier protein]-L-cysteine + a 4-thiouridine in tRNA + 2 oxidized [2Fe-2S]-[ferredoxin] + AMP + diphosphate. It catalyses the reaction [ThiS sulfur-carrier protein]-C-terminal Gly-Gly-AMP + S-sulfanyl-L-cysteinyl-[cysteine desulfurase] + AH2 = [ThiS sulfur-carrier protein]-C-terminal-Gly-aminoethanethioate + L-cysteinyl-[cysteine desulfurase] + A + AMP + 2 H(+). It participates in cofactor biosynthesis; thiamine diphosphate biosynthesis. In terms of biological role, catalyzes the ATP-dependent transfer of a sulfur to tRNA to produce 4-thiouridine in position 8 of tRNAs, which functions as a near-UV photosensor. Also catalyzes the transfer of sulfur to the sulfur carrier protein ThiS, forming ThiS-thiocarboxylate. This is a step in the synthesis of thiazole, in the thiamine biosynthesis pathway. The sulfur is donated as persulfide by IscS. The protein is tRNA sulfurtransferase of Pseudomonas syringae pv. tomato (strain ATCC BAA-871 / DC3000).